Reading from the N-terminus, the 122-residue chain is Large ribosomal subunit protein uL14 (122 aa).

The protein belongs to the universal ribosomal protein uL14 family. In terms of assembly, part of the 50S ribosomal subunit. Forms a cluster with proteins L3 and L19. In the 70S ribosome, L14 and L19 interact and together make contacts with the 16S rRNA in bridges B5 and B8.

In terms of biological role, binds to 23S rRNA. Forms part of two intersubunit bridges in the 70S ribosome. This Trichlorobacter lovleyi (strain ATCC BAA-1151 / DSM 17278 / SZ) (Geobacter lovleyi) protein is Large ribosomal subunit protein uL14.